A 159-amino-acid chain; its full sequence is Nanos homolog 3 (159 aa).

Residues 42–87 (QEMQSDADSDEQAAALLESPSGPIRSRDSPEQNTSPGGGKPKSSPA) are disordered. The segment at 91 to 145 (FCSFCKHNGETEAVYTSHYLKNRDGDVMCPYLRQYKCPLCGATGAKAHTKRFCPM) adopts a Nanos-type zinc-finger fold. Zn(2+)-binding residues include Cys-92, Cys-95, His-108, Cys-119, Cys-127, Cys-130, His-138, and Cys-143. 2 consecutive short sequence motifs (C2HC) follow at residues 92 to 119 (CSFCKHNGETEAVYTSHYLKNRDGDVMC) and 127 to 143 (CPLCGATGAKAHTKRFC). The interval 92 to 159 (CSFCKHNGET…YCSVYAKSTW (68 aa)) is interaction with mylpfa.

The protein belongs to the nanos family. In terms of assembly, interacts (via C-terminus) with myosin mylpfa/mylz2; the interaction negatively regulates mylpfa phosphorylation. In the embryo, displays early ubiquitous expression before being restricted to primordial germ cells in a 3'-UTR-dependent manner. Expressed in early stage germ cells in larval and adult ovaries.

The protein localises to the cytoplasm. Its subcellular location is the perinuclear region. RNA-binding protein which binds to RNA with no sequence specificity. Probably represses translation of specific mRNAs. Essential for the development of primordial germ cells (PGCs) by ensuring their proper migration and survival but is not required for PGC specification. Also required to maintain oocyte production in the adult ovary. Negatively regulates phosphorylation of myosin mylpfa/mylz2. The sequence is that of Nanos homolog 3 from Danio rerio (Zebrafish).